The primary structure comprises 513 residues: Acetylcholine receptor subunit delta (513 aa).

An N-terminal signal peptide occupies residues 1-18 (MAVLLALFGALVLSGGLC). Residues 19-244 (VNQEERLIHH…ITFYLIIKRK (226 aa)) lie on the Extracellular side of the membrane. Asparagine 88 and asparagine 161 each carry an N-linked (GlcNAc...) asparagine glycan. Residues cysteine 148 and cysteine 162 are joined by a disulfide bond. Helical transmembrane passes span 245–269 (PLFY…VFYL), 277–295 (MTLV…LLVS), and 311–332 (YLLF…VLNF). At 333–467 (HFRTPSTHVM…WNRVARTLDR (135 aa)) the chain is on the cytoplasmic side. Tyrosine 388 bears the Phosphotyrosine; by Tyr-kinases mark. A helical membrane pass occupies residues 468 to 490 (LCLFLITPMLVVGTLWIFLMGIY).

This sequence belongs to the ligand-gated ion channel (TC 1.A.9) family. Acetylcholine receptor (TC 1.A.9.1) subfamily. Pentamer of two alpha chains, and one each of the beta, delta, and gamma chains.

The protein localises to the postsynaptic cell membrane. Its subcellular location is the cell membrane. The catalysed reaction is K(+)(in) = K(+)(out). It catalyses the reaction Na(+)(in) = Na(+)(out). Functionally, after binding acetylcholine, the AChR responds by an extensive change in conformation that affects all subunits and leads to opening of an ion-conducting channel across the plasma membrane. The polypeptide is Acetylcholine receptor subunit delta (CHRND) (Gallus gallus (Chicken)).